The sequence spans 907 residues: Interference hedgehog (907 aa).

Residues Met1–Ala23 form the signal peptide. At Ala24 to Pro709 the chain is on the extracellular side. Ig-like C2-type domains lie at Pro42 to Ser149, Gly152 to Ala233, Pro252 to Leu340, and Pro346 to Asn433. Intrachain disulfides connect Cys65–Cys127, Cys173–Cys221, and Cys276–Cys324. Asn101, Asn203, Asn300, and Asn355 each carry an N-linked (GlcNAc...) asparagine glycan. Cys367 and Cys415 are oxidised to a cystine. The interval Gly427–Val474 is disordered. Over residues Gln462 to Val474 the composition is skewed to polar residues. Fibronectin type-III domains follow at residues Pro468–Gly578 and Val586–Pro681. Asn473 is a glycosylation site (N-linked (GlcNAc...) asparagine). Positions 504, 511, and 513 each coordinate heparin. N-linked (GlcNAc...) asparagine glycosylation is found at Asn537 and Asn548. Position 552 (Arg552) interacts with heparin. Asn568 carries an N-linked (GlcNAc...) asparagine glycan. Residues Gly676–Gln688 show a composition bias toward polar residues. A disordered region spans residues Gly676–His701. N-linked (GlcNAc...) asparagine glycosylation is present at Asn702. A helical membrane pass occupies residues Met710–Leu730. Topologically, residues Cys731–Val907 are cytoplasmic. 2 disordered regions span residues Ala780–Asp805 and Met829–Gly881. 2 stretches are compositionally biased toward low complexity: residues Gln781–Gln794 and Asn853–Gly863. A compositionally biased stretch (polar residues) spans Leu865–Asn878.

The protein belongs to the immunoglobulin superfamily. IHOG family. As to quaternary structure, homodimer. Heterotetramer; 2 iHog chains bind 2 hh chains when facilitated by heparin, heparin is required to promote high-affinity interactions between hh and iHog.

The protein resides in the membrane. Its function is as follows. Mediates response to the active Hedgehog (Hh) protein signal in embryos, functioning upstream or at the level of patched (ptc). This is Interference hedgehog from Drosophila virilis (Fruit fly).